A 227-amino-acid polypeptide reads, in one-letter code: Octanoyltransferase (227 aa).

In terms of domain architecture, BPL/LPL catalytic spans alanine 43–glutamate 218. Substrate contacts are provided by residues arginine 82–histidine 89, serine 149–glycine 151, and glycine 162–alanine 164. Catalysis depends on cysteine 180, which acts as the Acyl-thioester intermediate.

It belongs to the LipB family.

Its subcellular location is the cytoplasm. It catalyses the reaction octanoyl-[ACP] + L-lysyl-[protein] = N(6)-octanoyl-L-lysyl-[protein] + holo-[ACP] + H(+). The protein operates within protein modification; protein lipoylation via endogenous pathway; protein N(6)-(lipoyl)lysine from octanoyl-[acyl-carrier-protein]: step 1/2. Functionally, catalyzes the transfer of endogenously produced octanoic acid from octanoyl-acyl-carrier-protein onto the lipoyl domains of lipoate-dependent enzymes. Lipoyl-ACP can also act as a substrate although octanoyl-ACP is likely to be the physiological substrate. The chain is Octanoyltransferase from Shewanella denitrificans (strain OS217 / ATCC BAA-1090 / DSM 15013).